The following is a 92-amino-acid chain: Large ribosomal subunit protein eL31 (92 aa).

The protein belongs to the eukaryotic ribosomal protein eL31 family.

This chain is Large ribosomal subunit protein eL31, found in Halobacterium salinarum (strain ATCC 29341 / DSM 671 / R1).